A 453-amino-acid polypeptide reads, in one-letter code: Allantoinase (453 aa).

The Zn(2+) site is built by H59, H61, K146, H186, H242, and D315. Residue K146 is modified to N6-carboxylysine.

It belongs to the metallo-dependent hydrolases superfamily. Allantoinase family. In terms of assembly, homotetramer. Requires Zn(2+) as cofactor. In terms of processing, carboxylation allows a single lysine to coordinate two zinc ions.

The catalysed reaction is (S)-allantoin + H2O = allantoate + H(+). The protein operates within nitrogen metabolism; (S)-allantoin degradation; allantoate from (S)-allantoin: step 1/1. Catalyzes the conversion of allantoin (5-ureidohydantoin) to allantoic acid by hydrolytic cleavage of the five-member hydantoin ring. The polypeptide is Allantoinase (Escherichia coli O139:H28 (strain E24377A / ETEC)).